The primary structure comprises 174 residues: Crossover junction endodeoxyribonuclease RuvC (174 aa).

Residues aspartate 8, glutamate 67, and aspartate 139 contribute to the active site. 3 residues coordinate Mg(2+): aspartate 8, glutamate 67, and aspartate 139.

The protein belongs to the RuvC family. As to quaternary structure, homodimer which binds Holliday junction (HJ) DNA. The HJ becomes 2-fold symmetrical on binding to RuvC with unstacked arms; it has a different conformation from HJ DNA in complex with RuvA. In the full resolvosome a probable DNA-RuvA(4)-RuvB(12)-RuvC(2) complex forms which resolves the HJ. Mg(2+) is required as a cofactor.

The protein resides in the cytoplasm. It carries out the reaction Endonucleolytic cleavage at a junction such as a reciprocal single-stranded crossover between two homologous DNA duplexes (Holliday junction).. Functionally, the RuvA-RuvB-RuvC complex processes Holliday junction (HJ) DNA during genetic recombination and DNA repair. Endonuclease that resolves HJ intermediates. Cleaves cruciform DNA by making single-stranded nicks across the HJ at symmetrical positions within the homologous arms, yielding a 5'-phosphate and a 3'-hydroxyl group; requires a central core of homology in the junction. The consensus cleavage sequence is 5'-(A/T)TT(C/G)-3'. Cleavage occurs on the 3'-side of the TT dinucleotide at the point of strand exchange. HJ branch migration catalyzed by RuvA-RuvB allows RuvC to scan DNA until it finds its consensus sequence, where it cleaves and resolves the cruciform DNA. The polypeptide is Crossover junction endodeoxyribonuclease RuvC (Pseudomonas putida (strain GB-1)).